The chain runs to 283 residues: Pantothenate synthetase (283 aa).

Position 30–37 (30–37 (MGNLHDGH)) interacts with ATP. The Proton donor role is filled by His37. Gln61 serves as a coordination point for (R)-pantoate. Gln61 provides a ligand contact to beta-alanine. 149 to 152 (GEKD) is a binding site for ATP. Position 155 (Gln155) interacts with (R)-pantoate. 186–189 (LSSR) is an ATP binding site.

This sequence belongs to the pantothenate synthetase family. In terms of assembly, homodimer.

Its subcellular location is the cytoplasm. It catalyses the reaction (R)-pantoate + beta-alanine + ATP = (R)-pantothenate + AMP + diphosphate + H(+). It functions in the pathway cofactor biosynthesis; (R)-pantothenate biosynthesis; (R)-pantothenate from (R)-pantoate and beta-alanine: step 1/1. Functionally, catalyzes the condensation of pantoate with beta-alanine in an ATP-dependent reaction via a pantoyl-adenylate intermediate. This is Pantothenate synthetase from Escherichia coli (strain ATCC 8739 / DSM 1576 / NBRC 3972 / NCIMB 8545 / WDCM 00012 / Crooks).